The sequence spans 812 residues: MKNNQFGRIRLDRTTELEELKNIHFIDADLLADPKAQLKDFLKRSCLVSNSEATFQQKLSNLLATPDQTMAAFFESDQPLTLEIFILLELQLLQFEADTDYQIEDPLSAISKIQLPELDLKNFETSADVAHAWYNLLTTHTKNGEVYLDRLTQQGYFVSFYPTTTKPLFFNGKAQAVFDPHQLIREVVYVEAPLDTDHDGQRDLLKAEILRPAQTAHGYQAPVLYTASPYNQGTNDSYGEAITHNVDVPLTEKAVQKISKSDVTAEPFSQTLPAERKVAGMATKASETFAREQPYTLNNYFLSRGFAVVYAAGIGTRDSDGLRDTGSVEETISTTAIIEWLAGNRRAFTNKTDNLEIKASWSNHKIAMTGRSYLGTLATAAATTGVEGLETIISEAAISSWYDYYRDGGLVAAPDTFQGEDMDVLAAEVLSRKHDAGDYLGIKAHFDQILKRIEKDQDRDSGNYSKYWDSKNYLNNVKNIKADIIMVHGLNDWNVKPRNVGKLWNAVRDLPINKKIILHQGQHIYINAFRSIDFTDMMNLWLSYKLFDVQNGANEVLPNVIIQDNVEPETWNTYQDWQAADDEIREFTLQAKTLVDRASETKNEAASFRDSLDPEFFEMYKNDLKHWHTDLLNTEHATNGKNQMRNNRLIFKTAQTKEDWLIDGTPEVSVNVAVNQPFGMLSFQLVDFGDAKRLNPSPSILQPRSLSGSFDWRTDDLREFTLQNAVTPWKMISKGHINLQNRTNNYCVDEVKPHQFYDVKLELQPTFYRLLAGHQLGLVIYATDFETTIRGNQELLYSLQLNQSHLKIKLAH.

Residues Ser372, Asp492, and His523 each act as charge relay system in the active site.

The protein belongs to the peptidase S15 family. Homodimer.

It localises to the cytoplasm. It catalyses the reaction Hydrolyzes Xaa-Pro-|- bonds to release unblocked, N-terminal dipeptides from substrates including Ala-Pro-|-p-nitroanilide and (sequentially) Tyr-Pro-|-Phe-Pro-|-Gly-Pro-|-Ile.. Its function is as follows. Removes N-terminal dipeptides sequentially from polypeptides having unsubstituted N-termini provided that the penultimate residue is proline. The polypeptide is Xaa-Pro dipeptidyl-peptidase (Pediococcus pentosaceus (strain ATCC 25745 / CCUG 21536 / LMG 10740 / 183-1w)).